A 1794-amino-acid polypeptide reads, in one-letter code: Protein TIC 214 (1794 aa).

A run of 6 helical transmembrane segments spans residues Ile-19–Gly-39, Phe-68–Leu-88, Pro-91–His-111, Val-133–Leu-153, Val-176–Ile-196, and Ile-227–Ile-247.

It belongs to the TIC214 family. As to quaternary structure, part of the Tic complex.

The protein resides in the plastid. The protein localises to the chloroplast inner membrane. In terms of biological role, involved in protein precursor import into chloroplasts. May be part of an intermediate translocation complex acting as a protein-conducting channel at the inner envelope. This chain is Protein TIC 214, found in Olimarabidopsis pumila (Dwarf rocket).